The sequence spans 201 residues: Small ribosomal subunit protein uS4c (201 aa).

One can recognise an S4 RNA-binding domain in the interval 89–149 (MRLDNILFRL…DEQKSRALIQ (61 aa)).

It belongs to the universal ribosomal protein uS4 family. As to quaternary structure, part of the 30S ribosomal subunit. Contacts protein S5. The interaction surface between S4 and S5 is involved in control of translational fidelity.

The protein localises to the plastid. Its subcellular location is the chloroplast. In terms of biological role, one of the primary rRNA binding proteins, it binds directly to 16S rRNA where it nucleates assembly of the body of the 30S subunit. Its function is as follows. With S5 and S12 plays an important role in translational accuracy. The protein is Small ribosomal subunit protein uS4c (rps4) of Coffea arabica (Arabian coffee).